Consider the following 359-residue polypeptide: UDP-3-O-acylglucosamine N-acyltransferase (359 aa).

The active-site Proton acceptor is His-253.

It belongs to the transferase hexapeptide repeat family. LpxD subfamily. In terms of assembly, homotrimer.

The enzyme catalyses a UDP-3-O-[(3R)-3-hydroxyacyl]-alpha-D-glucosamine + a (3R)-hydroxyacyl-[ACP] = a UDP-2-N,3-O-bis[(3R)-3-hydroxyacyl]-alpha-D-glucosamine + holo-[ACP] + H(+). It functions in the pathway bacterial outer membrane biogenesis; LPS lipid A biosynthesis. Functionally, catalyzes the N-acylation of UDP-3-O-acylglucosamine using 3-hydroxyacyl-ACP as the acyl donor. Is involved in the biosynthesis of lipid A, a phosphorylated glycolipid that anchors the lipopolysaccharide to the outer membrane of the cell. This Burkholderia cenocepacia (strain ATCC BAA-245 / DSM 16553 / LMG 16656 / NCTC 13227 / J2315 / CF5610) (Burkholderia cepacia (strain J2315)) protein is UDP-3-O-acylglucosamine N-acyltransferase.